Reading from the N-terminus, the 263-residue chain is Receptor-transporting protein 1 (263 aa).

Residues 1-238 lie on the Cytoplasmic side of the membrane; the sequence is MRIFRPWRLR…QTGSGWNFCS (238 aa). The segment at 88–197 adopts a 3CxxC-type zinc-finger fold; the sequence is ASGRFHCSWC…GEFCEACQEG (110 aa). Residues 239–259 traverse the membrane as a helical segment; that stretch reads IPWCLFWATVLLLIIYLQFSF. Topologically, residues 260 to 263 are extracellular; that stretch reads RSSV.

The protein belongs to the TMEM7 family. In terms of assembly, interacts with olfactory receptors. As to expression, expressed in testis.

The protein localises to the cell membrane. Specifically promotes functional cell surface expression of olfactory receptors, but not of other GPCRs. This Homo sapiens (Human) protein is Receptor-transporting protein 1 (RTP1).